The following is a 168-amino-acid chain: Photosystem I assembly protein Ycf3 (168 aa).

TPR repeat units lie at residues 35–68, 72–105, and 120–153; these read AFTY…EIDP, SYIL…NPFL, and GEQA…TPGN.

It belongs to the Ycf3 family.

It is found in the plastid. Its subcellular location is the chloroplast thylakoid membrane. In terms of biological role, essential for the assembly of the photosystem I (PSI) complex. May act as a chaperone-like factor to guide the assembly of the PSI subunits. The protein is Photosystem I assembly protein Ycf3 of Lactuca sativa (Garden lettuce).